Consider the following 402-residue polypeptide: Dynactin subunit 2 (402 aa).

The interval 1–26 is disordered; the sequence is MADPKYADLPGIARNEPDVYETSDLP. Coiled coils occupy residues 101–132 and 357–402; these read PQQRYQRLQHEVQELIRDVEQIQSAVKESAAE and VHLD…KRLQ.

The protein belongs to the dynactin subunit 2 family. In terms of assembly, subunit of dynactin, a multiprotein complex part of a tripartite complex with dynein and a adapter, such as BICDL1, BICD2 or HOOK3. The dynactin complex is built around ACTR1A/ACTB filament and consists of an actin-related filament composed of a shoulder domain, a pointed end and a barbed end. Its length is defined by its flexible shoulder domain. The soulder is composed of 2 DCTN1 subunits, 4 DCTN2 and 2 DCTN3.

The protein localises to the cytoplasm. Its subcellular location is the cytoskeleton. The protein resides in the microtubule organizing center. It is found in the centrosome. It localises to the membrane. In terms of biological role, part of the dynactin complex that activates the molecular motor dynein for ultra-processive transport along microtubules. In the dynactin soulder domain, binds the ACTR1A filament and acts as a molecular ruler to determine the length. Modulates cytoplasmic dynein binding to an organelle, and plays a role in prometaphase chromosome alignment and spindle organization during mitosis. Involved in anchoring microtubules to centrosomes. The polypeptide is Dynactin subunit 2 (DCTN2) (Gallus gallus (Chicken)).